Consider the following 740-residue polypeptide: 1,4-alpha-glucan branching enzyme GlgB (740 aa).

Aspartate 419 acts as the Nucleophile in catalysis. Glutamate 472 serves as the catalytic Proton donor.

The protein belongs to the glycosyl hydrolase 13 family. GlgB subfamily. As to quaternary structure, monomer.

The catalysed reaction is Transfers a segment of a (1-&gt;4)-alpha-D-glucan chain to a primary hydroxy group in a similar glucan chain.. It functions in the pathway glycan biosynthesis; glycogen biosynthesis. Functionally, catalyzes the formation of the alpha-1,6-glucosidic linkages in glycogen by scission of a 1,4-alpha-linked oligosaccharide from growing alpha-1,4-glucan chains and the subsequent attachment of the oligosaccharide to the alpha-1,6 position. The chain is 1,4-alpha-glucan branching enzyme GlgB from Thiobacillus denitrificans (strain ATCC 25259 / T1).